The following is a 236-amino-acid chain: Sensory rhodopsin I (236 aa).

7 helical membrane-spanning segments follow: residues 6–26 (VVYG…GFLY), 37–57 (ILAA…AMVF), 74–94 (YLDW…TAGA), 98–118 (AIFG…GAVV), 126–146 (ALFG…YLIF), 167–187 (VGLL…GLGF), and 192–212 (GVSI…VYFF). At lysine 205 the chain carries N6-(retinylidene)lysine.

Belongs to the archaeal/bacterial/fungal opsin family. Interacts with Htr1. The covalent binding of retinal to the apoprotein, bacterioopsin, generates bacteriorhodopsin.

It localises to the membrane. Functionally, photoattractant rhodopsin. The protein is Sensory rhodopsin I (sop1) of Haloarcula marismortui (strain ATCC 43049 / DSM 3752 / JCM 8966 / VKM B-1809) (Halobacterium marismortui).